The chain runs to 422 residues: MDKLLIRGGRALHGEVTVSGAKNAALPELCAALLSSEPVTLRNVPRLQDVATMLKLIRNMGVSAEHDDSGTVRINAGSLSNPEAPYELVKTMRASVLALGPLLARFGQARVSLPGGCAIGSRPVDQHIKGLQAMGAEIVVENGYMNACLPGHLKRLQGARITTDMVTVTGTENFLMAAVLAEGETVLENAAMEPEIGDLAEMLIKMGARIEGHGTGRIVIQGVERLGGCEHQVVADRIEAGTFLCAVAATGGNALLRNGRADHLGAVIDKLKDAGAEVSAEDGGIRVRAAGKLKAQSFRTTEYPGFPTDMQAQFMALNLVAEGCSMVTETIFENRFMHVDEMLRLGAQITTDGRVATITGSQSLSGAAVMATDLRASASLVIAGLVAKGETLVDRIYHLDRGYDRMEDKLRGLGADIERVSQ.

Residue 22–23 (KN) coordinates phosphoenolpyruvate. UDP-N-acetyl-alpha-D-glucosamine is bound at residue Arg-93. Cys-117 functions as the Proton donor in the catalytic mechanism. A 2-(S-cysteinyl)pyruvic acid O-phosphothioketal modification is found at Cys-117. UDP-N-acetyl-alpha-D-glucosamine contacts are provided by residues 122 to 126 (RPVDQ), Asp-309, and Ile-331.

This sequence belongs to the EPSP synthase family. MurA subfamily.

Its subcellular location is the cytoplasm. The catalysed reaction is phosphoenolpyruvate + UDP-N-acetyl-alpha-D-glucosamine = UDP-N-acetyl-3-O-(1-carboxyvinyl)-alpha-D-glucosamine + phosphate. It functions in the pathway cell wall biogenesis; peptidoglycan biosynthesis. Its function is as follows. Cell wall formation. Adds enolpyruvyl to UDP-N-acetylglucosamine. The protein is UDP-N-acetylglucosamine 1-carboxyvinyltransferase of Delftia acidovorans (strain DSM 14801 / SPH-1).